Reading from the N-terminus, the 224-residue chain is Peptide deformylase 3 (224 aa).

Fe cation contacts are provided by Cys135 and His177. The active site involves Glu178. His181 serves as a coordination point for Fe cation.

The protein belongs to the polypeptide deformylase family. The cofactor is Fe(2+).

It carries out the reaction N-terminal N-formyl-L-methionyl-[peptide] + H2O = N-terminal L-methionyl-[peptide] + formate. Its function is as follows. Removes the formyl group from the N-terminal Met of newly synthesized proteins. Requires at least a dipeptide for an efficient rate of reaction. N-terminal L-methionine is a prerequisite for activity but the enzyme has broad specificity at other positions. In Streptomyces avermitilis (strain ATCC 31267 / DSM 46492 / JCM 5070 / NBRC 14893 / NCIMB 12804 / NRRL 8165 / MA-4680), this protein is Peptide deformylase 3.